We begin with the raw amino-acid sequence, 486 residues long: Keratin, type II cuticular Hb6 (486 aa).

A head region spans residues 1 to 106 (MTCGSYCGGR…PNAQCVKHEE (106 aa)). Positions 106–417 (EKEQIKCLNS…RLLEGEEQRL (312 aa)) constitute an IF rod domain. A coil 1A region spans residues 107-141 (KEQIKCLNSKFAAFIDKVRFLEQQNKLLETKWQFY). The interval 142-151 (QNRKCCESNM) is linker 1. The coil 1B stretch occupies residues 152 to 252 (EPLFEGYIEA…YDEETRILHS (101 aa)). Residue Lys-212 forms a Glycyl lysine isopeptide (Lys-Gly) (interchain with G-Cter in SUMO1) linkage. The linker 12 stretch occupies residues 253–269 (HISDTSIVVKMDNSRDL). A coil 2 region spans residues 270–413 (NMDCVVAEIK…TTYRRLLEGE (144 aa)). The interval 414–486 (EQRLCEGVGS…GACSGGCKKC (73 aa)) is tail.

This sequence belongs to the intermediate filament family. As to quaternary structure, heterotetramer of two type I and two type II keratins.

This is Keratin, type II cuticular Hb6 (Krt86) from Mus musculus (Mouse).